We begin with the raw amino-acid sequence, 66 residues long: DNA-directed RNA polymerase subunit Rpo10 (66 aa).

The Zn(2+) site is built by cysteine 7, cysteine 10, cysteine 44, and cysteine 45.

The protein belongs to the archaeal Rpo10/eukaryotic RPB10 RNA polymerase subunit family. Part of the 13-subunit RNA polymerase complex. The cofactor is Zn(2+).

The protein resides in the cytoplasm. The catalysed reaction is RNA(n) + a ribonucleoside 5'-triphosphate = RNA(n+1) + diphosphate. Functionally, DNA-dependent RNA polymerase (RNAP) catalyzes the transcription of DNA into RNA using the four ribonucleoside triphosphates as substrates. The chain is DNA-directed RNA polymerase subunit Rpo10 from Sulfolobus acidocaldarius (strain ATCC 33909 / DSM 639 / JCM 8929 / NBRC 15157 / NCIMB 11770).